We begin with the raw amino-acid sequence, 204 residues long: Pyrrolidone-carboxylate peptidase (204 aa).

Residues Glu-78, Cys-141, and His-165 contribute to the active site.

It belongs to the peptidase C15 family. In terms of assembly, homotetramer.

The protein resides in the cytoplasm. It carries out the reaction Release of an N-terminal pyroglutamyl group from a polypeptide, the second amino acid generally not being Pro.. Functionally, removes 5-oxoproline from various penultimate amino acid residues except L-proline. The sequence is that of Pyrrolidone-carboxylate peptidase from Levilactobacillus brevis (strain ATCC 367 / BCRC 12310 / CIP 105137 / JCM 1170 / LMG 11437 / NCIMB 947 / NCTC 947) (Lactobacillus brevis).